We begin with the raw amino-acid sequence, 120 residues long: NAD(P)H-quinone oxidoreductase subunit 3, chloroplastic (120 aa).

3 helical membrane passes run Ile-9–Gly-29, Met-64–Met-84, and Val-88–Ser-108.

Belongs to the complex I subunit 3 family. In terms of assembly, NDH is composed of at least 16 different subunits, 5 of which are encoded in the nucleus.

It localises to the plastid. Its subcellular location is the chloroplast thylakoid membrane. The enzyme catalyses a plastoquinone + NADH + (n+1) H(+)(in) = a plastoquinol + NAD(+) + n H(+)(out). The catalysed reaction is a plastoquinone + NADPH + (n+1) H(+)(in) = a plastoquinol + NADP(+) + n H(+)(out). Its function is as follows. NDH shuttles electrons from NAD(P)H:plastoquinone, via FMN and iron-sulfur (Fe-S) centers, to quinones in the photosynthetic chain and possibly in a chloroplast respiratory chain. The immediate electron acceptor for the enzyme in this species is believed to be plastoquinone. Couples the redox reaction to proton translocation, and thus conserves the redox energy in a proton gradient. In Carica papaya (Papaya), this protein is NAD(P)H-quinone oxidoreductase subunit 3, chloroplastic.